Reading from the N-terminus, the 241-residue chain is Uridylate kinase (241 aa).

9 to 10 (GS) contributes to the ATP binding site. Residue glycine 44 coordinates UMP. Residues glycine 45 and arginine 49 each contribute to the ATP site. Residues aspartate 66 and 114–120 (VTPGQTT) contribute to the UMP site. The ATP site is built by threonine 140, tyrosine 146, and aspartate 149. The disordered stretch occupies residues 222 to 241 (TDVIPTGSEEPIYWTGSSDA).

It belongs to the UMP kinase family. Homohexamer.

The protein localises to the cytoplasm. It catalyses the reaction UMP + ATP = UDP + ADP. The protein operates within pyrimidine metabolism; CTP biosynthesis via de novo pathway; UDP from UMP (UMPK route): step 1/1. Inhibited by UTP. Catalyzes the reversible phosphorylation of UMP to UDP. This Halorubrum lacusprofundi (strain ATCC 49239 / DSM 5036 / JCM 8891 / ACAM 34) protein is Uridylate kinase.